The chain runs to 132 residues: Inactive D-aminoacyl-tRNA deacylase (132 aa).

The protein belongs to the DTD family.

A non-functional D-aminoacyl-tRNA deacylase. In Bacillus subtilis (strain 168), this protein is Inactive D-aminoacyl-tRNA deacylase.